A 547-amino-acid chain; its full sequence is Dihydroxy-acid dehydratase (547 aa).

Asp78 lines the Mg(2+) pocket. Cys119 contacts [2Fe-2S] cluster. Positions 120 and 121 each coordinate Mg(2+). N6-carboxylysine is present on Lys121. A [2Fe-2S] cluster-binding site is contributed by Cys191. Glu439 is a binding site for Mg(2+). Ser464 acts as the Proton acceptor in catalysis.

It belongs to the IlvD/Edd family. As to quaternary structure, homodimer. Requires [2Fe-2S] cluster as cofactor. It depends on Mg(2+) as a cofactor.

It carries out the reaction (2R)-2,3-dihydroxy-3-methylbutanoate = 3-methyl-2-oxobutanoate + H2O. The catalysed reaction is (2R,3R)-2,3-dihydroxy-3-methylpentanoate = (S)-3-methyl-2-oxopentanoate + H2O. The protein operates within amino-acid biosynthesis; L-isoleucine biosynthesis; L-isoleucine from 2-oxobutanoate: step 3/4. It functions in the pathway amino-acid biosynthesis; L-valine biosynthesis; L-valine from pyruvate: step 3/4. In terms of biological role, functions in the biosynthesis of branched-chain amino acids. Catalyzes the dehydration of (2R,3R)-2,3-dihydroxy-3-methylpentanoate (2,3-dihydroxy-3-methylvalerate) into 2-oxo-3-methylpentanoate (2-oxo-3-methylvalerate) and of (2R)-2,3-dihydroxy-3-methylbutanoate (2,3-dihydroxyisovalerate) into 2-oxo-3-methylbutanoate (2-oxoisovalerate), the penultimate precursor to L-isoleucine and L-valine, respectively. This Archaeoglobus fulgidus (strain ATCC 49558 / DSM 4304 / JCM 9628 / NBRC 100126 / VC-16) protein is Dihydroxy-acid dehydratase.